The following is a 491-amino-acid chain: ATP-dependent protease ATPase subunit HslU (491 aa).

Residues Ile-34, 76-81, Asp-296, Glu-364, and Arg-436 each bind ATP; that span reads GVGKTE.

The protein belongs to the ClpX chaperone family. HslU subfamily. As to quaternary structure, a double ring-shaped homohexamer of HslV is capped on each side by a ring-shaped HslU homohexamer. The assembly of the HslU/HslV complex is dependent on binding of ATP.

The protein resides in the cytoplasm. ATPase subunit of a proteasome-like degradation complex; this subunit has chaperone activity. The binding of ATP and its subsequent hydrolysis by HslU are essential for unfolding of protein substrates subsequently hydrolyzed by HslV. HslU recognizes the N-terminal part of its protein substrates and unfolds these before they are guided to HslV for hydrolysis. The chain is ATP-dependent protease ATPase subunit HslU from Chlorobaculum tepidum (strain ATCC 49652 / DSM 12025 / NBRC 103806 / TLS) (Chlorobium tepidum).